Reading from the N-terminus, the 314-residue chain is Serine/threonine-protein phosphatase CPPED1 (314 aa).

A Phosphoserine modification is found at S2. Residues 47–250 (KAWSTGDCDN…KVVFSGHYHR (204 aa)) are catalytic. 4 residues coordinate a divalent metal cation: D53, D90, N127, and H247. A Phosphoserine modification is found at S294.

This sequence belongs to the metallophosphoesterase superfamily. CPPED1 family. A divalent metal cation serves as cofactor. As to expression, expressed in subcutaneous adipose tissue.

It localises to the cytoplasm. It catalyses the reaction O-phospho-L-seryl-[protein] + H2O = L-seryl-[protein] + phosphate. The catalysed reaction is O-phospho-L-threonyl-[protein] + H2O = L-threonyl-[protein] + phosphate. Its function is as follows. Protein phosphatase that dephosphorylates AKT family kinase specifically at 'Ser-473', blocking cell cycle progression and promoting cell apoptosis. May play an inhibitory role in glucose uptake by adipocytes. This chain is Serine/threonine-protein phosphatase CPPED1 (CPPED1), found in Homo sapiens (Human).